Here is a 74-residue protein sequence, read N- to C-terminus: UPF0435 protein ABC2298 (74 aa).

The protein belongs to the UPF0435 family.

The chain is UPF0435 protein ABC2298 from Shouchella clausii (strain KSM-K16) (Alkalihalobacillus clausii).